Reading from the N-terminus, the 593-residue chain is Proteasome-associated ATPase (593 aa).

Residues 23–95 (LLSQISYLEE…LKEEVDRLGQ (73 aa)) are a coiled coil. 282-287 (GCGKTL) provides a ligand contact to ATP. Positions 592-593 (YL) are docks into pockets in the proteasome alpha-ring.

This sequence belongs to the AAA ATPase family. As to quaternary structure, homohexamer. Assembles into a hexameric ring structure that caps the 20S proteasome core. Strongly interacts with the prokaryotic ubiquitin-like protein Pup through a hydrophobic interface; the interacting region of ARC lies in its N-terminal coiled-coil domain. There is one Pup binding site per ARC hexamer ring. Upon ATP-binding, the C-terminus of ARC interacts with the alpha-rings of the proteasome core, possibly by binding to the intersubunit pockets.

Its pathway is protein degradation; proteasomal Pup-dependent pathway. Its function is as follows. ATPase which is responsible for recognizing, binding, unfolding and translocation of pupylated proteins into the bacterial 20S proteasome core particle. May be essential for opening the gate of the 20S proteasome via an interaction with its C-terminus, thereby allowing substrate entry and access to the site of proteolysis. Thus, the C-termini of the proteasomal ATPase may function like a 'key in a lock' to induce gate opening and therefore regulate proteolysis. The polypeptide is Proteasome-associated ATPase (Geodermatophilus obscurus (strain ATCC 25078 / DSM 43160 / JCM 3152 / CCUG 61914 / KCC A-0152 / KCTC 9177 / NBRC 13315 / NRRL B-3577 / G-20)).